We begin with the raw amino-acid sequence, 961 residues long: MPNTDSLNNLFASDEFISRHIGPDQNQVEKMLATLEVDSLDALIEKTVPATIREAQPLPLAEPVAEHTALEELKSLAAKNDVFTSYIGLGYHPTRVPNVILRNVLENPGWYTAYTPYQPEIAQGRLEGLLNFQQMITDLTGMEMANASMLDEATAAAEAMAMAKRVGRKNSSNCFFIDKNCYPQTIAVMRTRAEHFGFDIIVDAPEKALAGEDYFGAILQYPGADGGIGDIESWIKTIQSKDALAIVAADIMSLVLLRSPGDMGADIVIGCNQRFGIPMGFGGPHAAFFAFKEKHKRSTPGRIIGVSVDSRGKQALRMAMQTREQHIRREKANSNICTSQVLLAVMSAFYAMYHGAEGVDRIARRIHILTKMLSEGLISLGYKLRHTTFFDTLCIEVGDQQKPLLDRAQHARINLCAMGSGALSISLSECTTLDDLTALIAVFAGGESPLDMPSLEAKAQQKAVLSENLLRDGRALQHEIFSQYHSETEMLRYLKRLESRDIALNHAMIPLGSCTMKLNATAEMIPVTWPEFGNMHPFAPISQAAGYAEMFNQLQHMLAACTGYDAISLQPNAGSQGEYAGLLTIKKYFEAKGEVRSICLIPQSAHGTNPASAQMASMKVVVVNCDDDGNVDIADLDAKIAQHGENIAAIMVTYPSTHGVFEENITQICDKIHAVGAQVYIDGANMNALVGIASPGHFGGDVSHLNLHKTFCIPHGGGGPGMGPIGVKDHLAPYLAAHPLQEIPGTVAANGTVSAAPWGSASILPISWMYIRMMGAKGMKMASEYAILNANYIAKRLKNHFPILYSGKHGFVAHECLLDLRPLKEASGVSEEDIAKRLMDFGFHAPTMSFPVAGTLMIEPTESENQFELDRFCDAMIQIREEIRKIEQGELPADDNPLVNAPHTLDDVCNSEWNRSYTRDQACRPLDYLKHHKVWPTVNRIDNVYGDRNLICSCPGVDDYR.

K709 is subject to N6-(pyridoxal phosphate)lysine.

The protein belongs to the GcvP family. As to quaternary structure, the glycine cleavage system is composed of four proteins: P, T, L and H. The cofactor is pyridoxal 5'-phosphate.

It carries out the reaction N(6)-[(R)-lipoyl]-L-lysyl-[glycine-cleavage complex H protein] + glycine + H(+) = N(6)-[(R)-S(8)-aminomethyldihydrolipoyl]-L-lysyl-[glycine-cleavage complex H protein] + CO2. Functionally, the glycine cleavage system catalyzes the degradation of glycine. The P protein binds the alpha-amino group of glycine through its pyridoxal phosphate cofactor; CO(2) is released and the remaining methylamine moiety is then transferred to the lipoamide cofactor of the H protein. The sequence is that of Glycine dehydrogenase (decarboxylating) from Teredinibacter turnerae (strain ATCC 39867 / T7901).